A 169-amino-acid chain; its full sequence is MYTSGYAHRSSSFSSAASKIARVSTENTTAGLISEVVYREDQPMMTQLLLLPLLQQLGQQSRWQLWLTPQQKLSREWVQASGLPLTKVMQISQLSPCHTVESMVRALRTGNYSVVIGWLTDDLTEEEHAELVDAANEGNAMGFIMRPVSASSHTTRQLSGLKIHSNLYH.

The segment at 106-112 is ftsZ binding; it reads ALRTGNY. Residues 162–169 are lon protease binding; the sequence is KIHSNLYH.

This sequence belongs to the SulA family. Interacts with FtsZ. In terms of processing, is rapidly cleaved and degraded by the Lon protease once DNA damage is repaired.

Component of the SOS system and an inhibitor of cell division. Accumulation of SulA causes rapid cessation of cell division and the appearance of long, non-septate filaments. In the presence of GTP, binds a polymerization-competent form of FtsZ in a 1:1 ratio, thus inhibiting FtsZ polymerization and therefore preventing it from participating in the assembly of the Z ring. This mechanism prevents the premature segregation of damaged DNA to daughter cells during cell division. The chain is Cell division inhibitor SulA from Shigella flexneri serotype 5b (strain 8401).